We begin with the raw amino-acid sequence, 792 residues long: Ribonucleoside-diphosphate reductase large subunit (792 aa).

The ATP-cone domain occupies 1–92; the sequence is MHVIKRDGRQ…VSNLHKETKK (92 aa). Residues 5–6, 11–17, Thr53, and Asp57 contribute to the ATP site; these read KR and ERVMFDK. The residue at position 17 (Lys17) is an N6-acetyllysine. Positions 202 and 217 each coordinate GDP. An intrachain disulfide couples Cys218 to Cys444. DTTP contacts are provided by residues 226 to 228, Lys243, Arg256, and 263 to 264; these read DSI and AG. N6-acetyllysine is present on Lys376. Asn427 lines the GDP pocket. Residue Asn427 is the Proton acceptor of the active site. The active-site Cysteine radical intermediate is Cys429. GDP contacts are provided by residues Glu431 and 604-607; that span reads TAST. Glu431 serves as the catalytic Proton acceptor. A Phosphothreonine modification is found at Thr751.

This sequence belongs to the ribonucleoside diphosphate reductase large chain family. In terms of assembly, heterodimer of a large and a small subunit. Interacts with RRM2B. Interacts with AHCYL1 which inhibits its activity.

The protein localises to the cytoplasm. The catalysed reaction is a 2'-deoxyribonucleoside 5'-diphosphate + [thioredoxin]-disulfide + H2O = a ribonucleoside 5'-diphosphate + [thioredoxin]-dithiol. Under complex allosteric control mediated by deoxynucleoside triphosphates and ATP binding to separate specificity and activation sites on the M1 subunit. The type of nucleotide bound at the specificity site determines substrate preference. It seems probable that ATP makes the enzyme reduce CDP and UDP, dGTP favors ADP reduction and dTTP favors GDP reduction. Stimulated by ATP and inhibited by dATP binding to the activity site, the dATP inhibition is mediated by AHCYL1 which stabilizes dATP in the site. Its function is as follows. Provides the precursors necessary for DNA synthesis. Catalyzes the biosynthesis of deoxyribonucleotides from the corresponding ribonucleotides. This chain is Ribonucleoside-diphosphate reductase large subunit (Rrm1), found in Mus musculus (Mouse).